The following is a 305-amino-acid chain: Dihydroorotate dehydrogenase B (NAD(+)), catalytic subunit (305 aa).

FMN-binding positions include S20 and 44 to 45 (KG). Residues K44 and 68–72 (NAIGI) each bind substrate. Positions 98 and 126 each coordinate FMN. Position 126 (N126) interacts with substrate. The Nucleophile role is filled by C129. K165 and I191 together coordinate FMN. 192–193 (NT) provides a ligand contact to substrate. FMN contacts are provided by residues G217, 243 to 244 (GG), and 265 to 266 (GT).

The protein belongs to the dihydroorotate dehydrogenase family. Type 1 subfamily. As to quaternary structure, heterotetramer of 2 PyrK and 2 PyrD type B subunits. FMN is required as a cofactor.

It localises to the cytoplasm. The enzyme catalyses (S)-dihydroorotate + NAD(+) = orotate + NADH + H(+). Its pathway is pyrimidine metabolism; UMP biosynthesis via de novo pathway; orotate from (S)-dihydroorotate (NAD(+) route): step 1/1. Catalyzes the conversion of dihydroorotate to orotate with NAD(+) as electron acceptor. This is Dihydroorotate dehydrogenase B (NAD(+)), catalytic subunit (pyrD) from Maridesulfovibrio salexigens (strain ATCC 14822 / DSM 2638 / NCIMB 8403 / VKM B-1763) (Desulfovibrio salexigens).